A 208-amino-acid polypeptide reads, in one-letter code: ATP-dependent Clp protease proteolytic subunit (208 aa).

The active-site Nucleophile is the Ser98. His123 is an active-site residue.

This sequence belongs to the peptidase S14 family. Fourteen ClpP subunits assemble into 2 heptameric rings which stack back to back to give a disk-like structure with a central cavity, resembling the structure of eukaryotic proteasomes.

The protein localises to the cytoplasm. The enzyme catalyses Hydrolysis of proteins to small peptides in the presence of ATP and magnesium. alpha-casein is the usual test substrate. In the absence of ATP, only oligopeptides shorter than five residues are hydrolyzed (such as succinyl-Leu-Tyr-|-NHMec, and Leu-Tyr-Leu-|-Tyr-Trp, in which cleavage of the -Tyr-|-Leu- and -Tyr-|-Trp bonds also occurs).. Cleaves peptides in various proteins in a process that requires ATP hydrolysis. Has a chymotrypsin-like activity. Plays a major role in the degradation of misfolded proteins. This Wolbachia pipientis subsp. Culex pipiens (strain wPip) protein is ATP-dependent Clp protease proteolytic subunit.